Reading from the N-terminus, the 374-residue chain is MKSGRFIGVMSGTSLDGVDVVLAAIDETMVAQQASLTWPIPGHLKKGILDICQGQLLTLSQLGQLDTQLGRLFAQAVNALLAQQHLQPRDIVAIGCHGQTVWHEPTGDAPHTLQIGDNNHIVAHTGITVVGDFRRRDIALGGQGAPLVPAFHHALLGHPTEKRMVLNIGGIANLSLLFPRQAVRGYDTGPGNMLMDAWIWRQCAQPYDKDAAWAKEGKVILPLLQKMLSDPYFAASAPKSTGREYFNYGWLERHLAAFPGASACDVQATLAELTAVSISHQVLLNGGCERLMVCGGGSRNPLVMARLAALLPGIEVATTDKAGISGDDMEALAFAWLAWRTLAGLPGNLPSVTGASKASILGAIYPATPELRVN.

Residue 12-19 (GTSLDGVD) participates in ATP binding.

This sequence belongs to the anhydro-N-acetylmuramic acid kinase family.

The catalysed reaction is 1,6-anhydro-N-acetyl-beta-muramate + ATP + H2O = N-acetyl-D-muramate 6-phosphate + ADP + H(+). It participates in amino-sugar metabolism; 1,6-anhydro-N-acetylmuramate degradation. Its pathway is cell wall biogenesis; peptidoglycan recycling. In terms of biological role, catalyzes the specific phosphorylation of 1,6-anhydro-N-acetylmuramic acid (anhMurNAc) with the simultaneous cleavage of the 1,6-anhydro ring, generating MurNAc-6-P. Is required for the utilization of anhMurNAc either imported from the medium or derived from its own cell wall murein, and thus plays a role in cell wall recycling. The chain is Anhydro-N-acetylmuramic acid kinase from Salmonella arizonae (strain ATCC BAA-731 / CDC346-86 / RSK2980).